A 575-amino-acid chain; its full sequence is MDASAVRKRAAELPAEPGVYQFEAGESVLYVGKAVDLRERVRSYVAPRSDRIRRMVEAAAAVDFAVTDTETQALLLEANLIKRHQPRYNVRLKDDKSYPLVQLTAHEAPRIEITRTPDEAATVFGPYTDKSRVETVVKALRETYELRGCSDHKYEGRDRPCLDYELGLCSAPCTGEIDTDAYAEDVESARRFFDGETGVLAEPLRREMETAAASQAFERAASLRDRLEAVETFHEGGSEAVSGRGGRRLDVLGVAVEGESATVARLRSEDGKLVERDRHRVDAPADAESVPSVLAAFIPQFYAERSLPDVLLLSERYDDEELDQWLHAEGVDIRVPGAGRAATLVELALKNARRTTAEADGPTALARRLGIDRPERIEGFDVSHAGGKDAVGSNVVFVDGSPETADYRRRSLDDENDDYANMRRLVRWRATRAVEGRDDRPTPDLLLIDGGDGQLGAAQDALAETGWDVPAIALAKADELVVTSDGVADWDDGPALRLLQRVRDEAHRFAVQYHQQVRDAVSTPLDSVPGVGPELRERLLKRFGTVDGVRSASREELERVDGVGEDTAAAIDAAL.

Residues 15–90 (AEPGVYQFEA…IKRHQPRYNV (76 aa)) enclose the GIY-YIG domain. In terms of domain architecture, UVR spans 198–233 (GVLAEPLRREMETAAASQAFERAASLRDRLEAVETF).

This sequence belongs to the UvrC family. As to quaternary structure, interacts with UvrB in an incision complex.

The protein resides in the cytoplasm. In terms of biological role, the UvrABC repair system catalyzes the recognition and processing of DNA lesions. UvrC both incises the 5' and 3' sides of the lesion. The N-terminal half is responsible for the 3' incision and the C-terminal half is responsible for the 5' incision. This is UvrABC system protein C from Natronomonas pharaonis (strain ATCC 35678 / DSM 2160 / CIP 103997 / JCM 8858 / NBRC 14720 / NCIMB 2260 / Gabara) (Halobacterium pharaonis).